Consider the following 343-residue polypeptide: Inositol 2-dehydrogenase (343 aa).

The protein belongs to the Gfo/Idh/MocA family. As to quaternary structure, homotetramer.

It carries out the reaction myo-inositol + NAD(+) = scyllo-inosose + NADH + H(+). In terms of biological role, involved in the oxidation of myo-inositol (MI) to 2-keto-myo-inositol (2KMI or 2-inosose). This Streptomyces avermitilis (strain ATCC 31267 / DSM 46492 / JCM 5070 / NBRC 14893 / NCIMB 12804 / NRRL 8165 / MA-4680) protein is Inositol 2-dehydrogenase.